The following is a 422-amino-acid chain: Protein phosphatase methylesterase 1 (422 aa).

A disordered region spans residues 1–27 (MSDMFRKSVLNKLPHLPPTRAPWADES). Active-site residues include serine 207, aspartate 234, and histidine 371.

It belongs to the AB hydrolase superfamily.

The enzyme catalyses [phosphatase 2A protein]-C-terminal L-leucine methyl ester + H2O = [phosphatase 2A protein]-C-terminal L-leucine + methanol + H(+). Its function is as follows. Demethylates proteins that have been reversibly carboxymethylated. Demethylates the phosphatase PP2A catalytic subunit. In Cryptococcus neoformans var. neoformans serotype D (strain JEC21 / ATCC MYA-565) (Filobasidiella neoformans), this protein is Protein phosphatase methylesterase 1 (PPE1).